The chain runs to 316 residues: Biotin synthase (316 aa).

Positions 38 to 266 constitute a Radical SAM core domain; it reads YKGKKIELCA…DKDIRVCGGR (229 aa). [4Fe-4S] cluster contacts are provided by Cys56, Cys60, and Cys63. The [2Fe-2S] cluster site is built by Ser100, Cys131, Cys191, and Arg261.

This sequence belongs to the radical SAM superfamily. Biotin synthase family. As to quaternary structure, homodimer. It depends on [4Fe-4S] cluster as a cofactor. [2Fe-2S] cluster serves as cofactor.

It carries out the reaction (4R,5S)-dethiobiotin + (sulfur carrier)-SH + 2 reduced [2Fe-2S]-[ferredoxin] + 2 S-adenosyl-L-methionine = (sulfur carrier)-H + biotin + 2 5'-deoxyadenosine + 2 L-methionine + 2 oxidized [2Fe-2S]-[ferredoxin]. The protein operates within cofactor biosynthesis; biotin biosynthesis; biotin from 7,8-diaminononanoate: step 2/2. Catalyzes the conversion of dethiobiotin (DTB) to biotin by the insertion of a sulfur atom into dethiobiotin via a radical-based mechanism. The protein is Biotin synthase of Thermodesulfovibrio yellowstonii (strain ATCC 51303 / DSM 11347 / YP87).